A 230-amino-acid chain; its full sequence is UPF0173 metal-dependent hydrolase RHOS4_08540 (230 aa).

This sequence belongs to the UPF0173 family.

The chain is UPF0173 metal-dependent hydrolase RHOS4_08540 from Cereibacter sphaeroides (strain ATCC 17023 / DSM 158 / JCM 6121 / CCUG 31486 / LMG 2827 / NBRC 12203 / NCIMB 8253 / ATH 2.4.1.) (Rhodobacter sphaeroides).